Consider the following 365-residue polypeptide: Phospho-N-acetylmuramoyl-pentapeptide-transferase (365 aa).

Transmembrane regions (helical) follow at residues 22 to 42, 74 to 94, 95 to 115, 134 to 154, 168 to 188, 201 to 221, 240 to 260, 267 to 287, 292 to 312, and 342 to 362; these read YISVRIIMISITSLLITLALG, TMGGVLILSSVIISCLLWGNL, TSIYLWILILVVIFFGAIGFF, KFALQSIFSIVLAIVLFYLLS, SLYIPMGIVIFVVLAFFIING, GLAIVPVVLVAAGLGIYAYIE, LAEVAVFCAAVCGSGLAFLWF, VFMGDVGSLTLGAVLGVIAVM, LIFFIMGLLFVVEALSVMLQV, and KVVIRFWIISLILFLIGFAAI.

The protein belongs to the glycosyltransferase 4 family. MraY subfamily. Mg(2+) serves as cofactor.

Its subcellular location is the cell inner membrane. It catalyses the reaction UDP-N-acetyl-alpha-D-muramoyl-L-alanyl-gamma-D-glutamyl-meso-2,6-diaminopimeloyl-D-alanyl-D-alanine + di-trans,octa-cis-undecaprenyl phosphate = di-trans,octa-cis-undecaprenyl diphospho-N-acetyl-alpha-D-muramoyl-L-alanyl-D-glutamyl-meso-2,6-diaminopimeloyl-D-alanyl-D-alanine + UMP. It participates in cell wall biogenesis; peptidoglycan biosynthesis. Catalyzes the initial step of the lipid cycle reactions in the biosynthesis of the cell wall peptidoglycan: transfers peptidoglycan precursor phospho-MurNAc-pentapeptide from UDP-MurNAc-pentapeptide onto the lipid carrier undecaprenyl phosphate, yielding undecaprenyl-pyrophosphoryl-MurNAc-pentapeptide, known as lipid I. In Francisella tularensis subsp. holarctica (strain OSU18), this protein is Phospho-N-acetylmuramoyl-pentapeptide-transferase.